The following is a 436-amino-acid chain: 3-ketoacyl-CoA thiolase (436 aa).

Cys99 acts as the Acyl-thioester intermediate in catalysis. Active-site proton acceptor residues include His392 and Cys422.

This sequence belongs to the thiolase-like superfamily. Thiolase family. Heterotetramer of two alpha chains (FadJ) and two beta chains (FadI).

It is found in the cytoplasm. It carries out the reaction an acyl-CoA + acetyl-CoA = a 3-oxoacyl-CoA + CoA. It functions in the pathway lipid metabolism; fatty acid beta-oxidation. Its function is as follows. Catalyzes the final step of fatty acid oxidation in which acetyl-CoA is released and the CoA ester of a fatty acid two carbons shorter is formed. This chain is 3-ketoacyl-CoA thiolase, found in Aeromonas salmonicida (strain A449).